We begin with the raw amino-acid sequence, 212 residues long: Methylthioribulose-1-phosphate dehydratase (212 aa).

Residues histidine 97 and histidine 99 each contribute to the Zn(2+) site.

This sequence belongs to the aldolase class II family. MtnB subfamily. As to quaternary structure, homotetramer. Requires Zn(2+) as cofactor.

The catalysed reaction is 5-(methylsulfanyl)-D-ribulose 1-phosphate = 5-methylsulfanyl-2,3-dioxopentyl phosphate + H2O. It participates in amino-acid biosynthesis; L-methionine biosynthesis via salvage pathway; L-methionine from S-methyl-5-thio-alpha-D-ribose 1-phosphate: step 2/6. In terms of biological role, catalyzes the dehydration of methylthioribulose-1-phosphate (MTRu-1-P) into 2,3-diketo-5-methylthiopentyl-1-phosphate (DK-MTP-1-P). The chain is Methylthioribulose-1-phosphate dehydratase from Bacillus thuringiensis (strain Al Hakam).